Here is a 205-residue protein sequence, read N- to C-terminus: MLAVYLHGFILSAAMILPLGPQNVFVMNQGIKRQHHLMSASLCALSDIILICAGIFGGSALLSRSPLLLALVTWGGVAFLMWYGWGALMAAWRGDGVASSATSVTQGRWRILVTLLAVTWLNPHVYLDTFVVLGSLGGQLLPDIRPWFALGAVTASIVWFFALAFLAAWLSPWLNRPVAQRIINLFVGGVMGFIAFQLARQGFGL.

The next 6 helical transmembrane spans lie at 1–21 (MLAV…PLGP), 42–62 (LCAL…SALL), 67–87 (LLLA…GWGA), 111–131 (ILVT…DTFV), 147–167 (WFAL…AFLA), and 185–205 (LFVG…GFGL).

It belongs to the LysE/ArgO transporter (TC 2.A.75) family.

It localises to the cell inner membrane. The catalysed reaction is L-arginine(in) = L-arginine(out). Its function is as follows. Involved in the export of arginine. Important to control the intracellular level of arginine and the correct balance between arginine and lysine. The chain is Arginine exporter protein ArgO from Yersinia pseudotuberculosis serotype O:3 (strain YPIII).